The following is an 82-amino-acid chain: RNA-binding protein BH0128 (82 aa).

Belongs to the eukaryotic ribosomal protein eL8 family.

The protein is RNA-binding protein BH0128 of Halalkalibacterium halodurans (strain ATCC BAA-125 / DSM 18197 / FERM 7344 / JCM 9153 / C-125) (Bacillus halodurans).